The following is a 347-amino-acid chain: Twinfilin-2 (347 aa).

2 consecutive ADF-H domains span residues 3-137 and 175-311; these read LVLV…RHIT and GLAF…DEVH. Residues 314–347 form a disordered region; sequence QHAHKQAFAKPRGPAGKRGNKRLIKGGGENGGNS. The segment covering 338-347 has biased composition (gly residues); that stretch reads KGGGENGGNS.

This sequence belongs to the actin-binding proteins ADF family. Twinfilin subfamily. In terms of assembly, interacts with G-actin; ADP-actin form and capping protein (CP).

It localises to the cytoplasm. Its subcellular location is the cytoskeleton. The protein localises to the perinuclear region. In terms of biological role, actin-binding protein involved in motile and morphological processes. Inhibits actin polymerization, likely by sequestering G-actin. The sequence is that of Twinfilin-2 (twf2) from Danio rerio (Zebrafish).